Reading from the N-terminus, the 174-residue chain is Co-chaperone protein HscB homolog (174 aa).

The J domain maps to 2 to 74 (NYFELFKFSP…IRRAEHMLSL (73 aa)).

Belongs to the HscB family. In terms of assembly, interacts with HscA and stimulates its ATPase activity.

In terms of biological role, co-chaperone involved in the maturation of iron-sulfur cluster-containing proteins. Seems to help targeting proteins to be folded toward HscA. In Shewanella baltica (strain OS223), this protein is Co-chaperone protein HscB homolog.